A 581-amino-acid chain; its full sequence is Sulfate adenylyltransferase (581 aa).

The segment at 1–176 (MANAPHGGVL…VQAIQAPTHF (176 aa)) is N-terminal. The catalytic stretch occupies residues 177–401 (DYVPLRYTPA…LRESYPPRPQ (225 aa)). Gln-204 serves as a coordination point for sulfate. Residues 204–207 (QTRN) and 298–301 (GRDH) each bind ATP. Active-site residues include Thr-205, Arg-206, and Asn-207. Arg-206 provides a ligand contact to sulfate. Residue Ala-302 coordinates sulfate. ATP is bound at residue Met-340. The segment at 402-581 (QGFTILLTGL…IMILESQNLV (180 aa)) is allosteric regulation domain; adenylyl-sulfate kinase-like. Residues 441–444 (EELR), 486–487 (TA), and Arg-526 each bind 3'-phosphoadenylyl sulfate.

In the N-terminal section; belongs to the sulfate adenylyltransferase family. It in the C-terminal section; belongs to the APS kinase family. As to quaternary structure, homohexamer. Dimer of trimers.

The protein localises to the cytoplasm. The enzyme catalyses sulfate + ATP + H(+) = adenosine 5'-phosphosulfate + diphosphate. It functions in the pathway sulfur metabolism; hydrogen sulfide biosynthesis; sulfite from sulfate: step 1/3. Its activity is regulated as follows. Allosterically inhibited by 3'-phosphoadenosine 5'-phosphosulfate (PAPS). Its function is as follows. Catalyzes the first intracellular reaction of sulfate assimilation, forming adenosine-5'-phosphosulfate (APS) from inorganic sulfate and ATP. Plays an important role in sulfate activation as a component of the biosynthesis pathway of sulfur-containing amino acids. The protein is Sulfate adenylyltransferase of Cryptococcus neoformans var. grubii serotype A (strain H99 / ATCC 208821 / CBS 10515 / FGSC 9487) (Filobasidiella neoformans var. grubii).